The following is a 590-amino-acid chain: Potassium-transporting ATPase potassium-binding subunit (590 aa).

10 helical membrane-spanning segments follow: residues 11–31 (IFIA…AAVF), 64–84 (TAYC…TYLI), 136–156 (GLAT…IAFI), 178–198 (ILWV…SQGV), 273–293 (MLEM…LGQM), 301–321 (WAVL…CYWA), 403–423 (AGLY…GLMV), 442–462 (AMLY…VAVL), 511–531 (LGFA…ALAG), and 552–572 (LFTV…FLPA).

The protein belongs to the KdpA family. As to quaternary structure, the system is composed of three essential subunits: KdpA, KdpB and KdpC.

It localises to the cell inner membrane. In terms of biological role, part of the high-affinity ATP-driven potassium transport (or Kdp) system, which catalyzes the hydrolysis of ATP coupled with the electrogenic transport of potassium into the cytoplasm. This subunit binds the periplasmic potassium ions and delivers the ions to the membrane domain of KdpB through an intramembrane tunnel. The sequence is that of Potassium-transporting ATPase potassium-binding subunit from Acidobacterium capsulatum (strain ATCC 51196 / DSM 11244 / BCRC 80197 / JCM 7670 / NBRC 15755 / NCIMB 13165 / 161).